A 346-amino-acid polypeptide reads, in one-letter code: Lysyl aminopeptidase (346 aa).

Zn(2+) contacts are provided by H63 and D177. The active-site Proton acceptor is E207. E208, D230, and H314 together coordinate Zn(2+).

As to quaternary structure, homotetramer. It depends on Zn(2+) as a cofactor.

The enzyme catalyses Preferentially, release of N-terminal lysine.. Its function is as follows. Hydrolyzes di-, tri- and tetrapeptides with a lysine as the N-terminal amino acid and with Gly, Lys, Ala, Phe or Glu in the second position. The chain is Lysyl aminopeptidase from Pyrococcus furiosus (strain ATCC 43587 / DSM 3638 / JCM 8422 / Vc1).